A 324-amino-acid polypeptide reads, in one-letter code: Chlorophyllase-1 (324 aa).

The GXSXG signature appears at glycine 136–glycine 140. Serine 138 serves as the catalytic Nucleophile. Active-site charge relay system residues include aspartate 168 and histidine 243.

It belongs to the AB hydrolase superfamily. Lipase family. Expressed in seedlings, leaves, flowers and siliques, but not in roots.

The protein resides in the cytoplasm. The protein localises to the cytosol. The catalysed reaction is a chlorophyll + H2O = a chlorophyllide + phytol + H(+). It carries out the reaction chlorophyll a + H2O = phytol + chlorophyllide a + H(+). Its pathway is porphyrin-containing compound metabolism; chlorophyll degradation. Catalyzes the hydrolysis of ester bond in chlorophyll to yield chlorophyllide and phytol. Shows a preferential activity toward chlorophyll a. Does not seem to be required for chlorophyll degradation during senescence. May modulate the balance between different plant defense pathways. The chain is Chlorophyllase-1 from Arabidopsis thaliana (Mouse-ear cress).